We begin with the raw amino-acid sequence, 122 residues long: MAEPGGRGDYHKDGRPPSLSRSPLFTTLGTSPACGLEIPPTSGARPDGSCSLPAHVYHLQSRQWKGMGRGHRQRWRLQGWGDGDTGCVVQAPSLFPAEIRERTTVKMATLPLDLCAGACWEM.

Residues 1–15 (MAEPGGRGDYHKDGR) are compositionally biased toward basic and acidic residues. The segment at 1–26 (MAEPGGRGDYHKDGRPPSLSRSPLFT) is disordered.

This is an uncharacterized protein from Macaca fascicularis (Crab-eating macaque).